Here is a 37-residue protein sequence, read N- to C-terminus: Large ribosomal subunit protein bL36c (37 aa).

This sequence belongs to the bacterial ribosomal protein bL36 family.

The protein resides in the plastid. It localises to the chloroplast. The sequence is that of Large ribosomal subunit protein bL36c (rpl36) from Porphyra purpurea (Red seaweed).